A 111-amino-acid chain; its full sequence is MKLHKKKLNITMTKQFIQKFPSNTVGSGGKTLLSKFQENSGLTETQIYILTQRVARLSSHLKNHNKDYSSQRGLRKLLGKRKRLLAYLSNEDVERYENLLIQLGIRGLKKI.

This sequence belongs to the universal ribosomal protein uS15 family. Part of the 30S ribosomal subunit.

The protein resides in the plastid. It localises to the chloroplast. The sequence is that of Small ribosomal subunit protein uS15c (rps15) from Staurastrum punctulatum (Green alga).